The primary structure comprises 248 residues: Pyridoxine 5'-phosphate synthase (248 aa).

Position 10 (asparagine 10) interacts with 3-amino-2-oxopropyl phosphate. 1-deoxy-D-xylulose 5-phosphate is bound at residue 12–13; it reads DH. 3-amino-2-oxopropyl phosphate is bound at residue arginine 21. Histidine 46 serves as the catalytic Proton acceptor. The 1-deoxy-D-xylulose 5-phosphate site is built by arginine 48 and histidine 53. Glutamate 73 (proton acceptor) is an active-site residue. Residue threonine 103 participates in 1-deoxy-D-xylulose 5-phosphate binding. Histidine 194 acts as the Proton donor in catalysis. 3-amino-2-oxopropyl phosphate contacts are provided by residues glycine 195 and 216 to 217; that span reads GH.

Belongs to the PNP synthase family. In terms of assembly, homooctamer; tetramer of dimers.

Its subcellular location is the cytoplasm. It catalyses the reaction 3-amino-2-oxopropyl phosphate + 1-deoxy-D-xylulose 5-phosphate = pyridoxine 5'-phosphate + phosphate + 2 H2O + H(+). Its pathway is cofactor biosynthesis; pyridoxine 5'-phosphate biosynthesis; pyridoxine 5'-phosphate from D-erythrose 4-phosphate: step 5/5. Catalyzes the complicated ring closure reaction between the two acyclic compounds 1-deoxy-D-xylulose-5-phosphate (DXP) and 3-amino-2-oxopropyl phosphate (1-amino-acetone-3-phosphate or AAP) to form pyridoxine 5'-phosphate (PNP) and inorganic phosphate. The sequence is that of Pyridoxine 5'-phosphate synthase from Legionella pneumophila (strain Paris).